We begin with the raw amino-acid sequence, 227 residues long: UPF0758 protein SSA_1218 (227 aa).

The region spanning 104-226 (QIMGSQKLAR…YYSYREETDM (123 aa)) is the MPN domain. The Zn(2+) site is built by His-175, His-177, and Asp-188. The JAMM motif motif lies at 175 to 188 (HNHPSGSVVPSRND).

Belongs to the UPF0758 family.

This Streptococcus sanguinis (strain SK36) protein is UPF0758 protein SSA_1218.